The sequence spans 1481 residues: Cystic fibrosis transmembrane conductance regulator (1481 aa).

Residues 1 to 77 (MQRSPLEKAS…KLINALRRCF (77 aa)) lie on the Cytoplasmic side of the membrane. Residues 78 to 98 (FWRFMFYGILLYLGEVTKAVQ) traverse the membrane as a helical segment. Residues 81-365 (FMFYGILLYL…WAVQTWYDSL (285 aa)) form the ABC transmembrane type-1 1 domain. Over 99–122 (PLLLGRIIASYDPDNKEERSIAIY) the chain is Extracellular. A helical transmembrane segment spans residues 123–146 (LGIGLCLLFIVRTLLLHPAIFGLH). Topologically, residues 147-195 (HIGMQMRIAMFSLIYKKTLKLSSRVLDKISIGQLVSLLSNNLNKFDEGL) are cytoplasmic. Residues 196–216 (ALAHFVWIVPLQVALLMGLIW) traverse the membrane as a helical segment. At 217-222 (ELLQAS) the chain is on the extracellular side. Residues 223–243 (AFCGLGFLIVLALFQAGLGRM) traverse the membrane as a helical segment. Residues 244–298 (MMKYRDQRAGKINERLVITSEMIENIQSVKAYCWEEAMEKMIENLRQTELKLTRK) are Cytoplasmic-facing. The chain crosses the membrane as a helical span at residues 299–319 (AAYVRYFNSSAFFFSGFFVVF). The Extracellular segment spans residues 320–339 (LSVLPYALIKGIVLRKIFTT). Residues 340-358 (ISFCIVLRMAVTRQFPWAV) form a helical membrane-spanning segment. The Cytoplasmic segment spans residues 359–858 (QTWYDSLGAI…YLRYITVHKS (500 aa)). ATP contacts are provided by residues W401, S434, 458–465 (GSTGAGKT), and Q493. In terms of domain architecture, ABC transporter 1 spans 423-646 (NDDDSLFFSN…RPDFSSKLMG (224 aa)). C524 carries the S-palmitoyl cysteine lipid modification. Residues S549 and S660 each carry the phosphoserine modification. Positions 654 to 831 (SAERRNSILT…EEINEEDLKE (178 aa)) are disordered R region. At S670 the chain carries Phosphoserine; by PKA. S686 is subject to Phosphoserine. A Glycyl lysine isopeptide (Lys-Gly) (interchain with G-Cter in ubiquitin) cross-link involves residue K688. 2 positions are modified to phosphoserine: S700 and S712. T717 carries the phosphothreonine modification. Phosphoserine is present on residues S737, S753, S768, S790, S795, and S813. A helical transmembrane segment spans residues 859–879 (LIFVLIWCLVIFLAEVAASLV). The ABC transmembrane type-1 2 domain maps to 859-1155 (LIFVLIWCLV…AVNSSIDVDS (297 aa)). The Extracellular segment spans residues 880 to 918 (VLWFLGNTPPQDKGNSTYSRNNSYAVIITRTSSYYVFYI). N894 and N900 each carry an N-linked (GlcNAc...) asparagine glycan. The chain crosses the membrane as a discontinuously helical span at residues 919 to 939 (YVGVADTLLAMGFFRGLPLVH). Residues 940–990 (TLITVSKILHHKMLHSVLQAPMSTLNTLKAGGILNRFSKDIAILDDLLPLT) lie on the Cytoplasmic side of the membrane. A helical transmembrane segment spans residues 991-1011 (IFDFIQLLLIVIGAIAVVAVL). Residues 1012–1013 (QP) are Extracellular-facing. A helical transmembrane segment spans residues 1014–1034 (YIFVATVPVIVAFIMLRAYFL). The Cytoplasmic portion of the chain corresponds to 1035–1095 (QTSQQLKQLE…TANWFLYLST (61 aa)). A helical transmembrane segment spans residues 1096–1116 (LRWFQMRIEMIFVIFFIAVTF). The Extracellular segment spans residues 1117–1130 (ISILTTGEGEGTVG). The chain crosses the membrane as a helical span at residues 1131-1151 (IILTLAMNIMSTLQWAVNSSI). Topologically, residues 1152-1481 (DVDSLMRSVS…TEEEVQDTRL (330 aa)) are cytoplasmic. One can recognise an ABC transporter 2 domain in the interval 1211–1444 (MTVKDLTAKY…RSLFRQAISP (234 aa)). Residues Y1220 and 1245-1252 (GRTGSGKS) each bind ATP. Residues 1387-1481 (RTLKQAFADC…TEEEVQDTRL (95 aa)) are interaction with GORASP2. C1396 carries the S-palmitoyl cysteine lipid modification. Phosphoserine occurs at positions 1445 and 1457. The short motif at 1479-1481 (TRL) is the PDZ-binding element.

Belongs to the ABC transporter superfamily. ABCC family. CFTR transporter (TC 3.A.1.202) subfamily. In terms of assembly, monomer; does not require oligomerization for channel activity. May form oligomers in the membrane. Interacts with SLC26A3, SLC26A6 and NHERF1. Interacts with SHANK2. Interacts with MYO6. Interacts (via C-terminus) with GOPC (via PDZ domain); this promotes CFTR internalization and thereby decreases channel activity. Interacts with SLC4A7 through NHERF1. Found in a complex with MYO5B and RAB11A. Interacts with ANO1. Interacts with SLC26A8. Interacts with AHCYL1; the interaction increases CFTR activity. Interacts with CSE1L. The core-glycosylated form interacts with GORASP2 (via PDZ GRASP-type 1 domain) in respone to ER stress. Interacts with MARCHF2; the interaction leads to CFTR ubiqtuitination and degradation. Interacts with ADGRG2. In terms of processing, N-glycosylated. Phosphorylated; cAMP treatment promotes phosphorylation and activates the channel. Dephosphorylation decreases the ATPase activity (in vitro). Phosphorylation at PKA sites activates the channel. Phosphorylation at PKC sites enhances the response to phosphorylation by PKA. Phosphorylated by AMPK; this inhibits channel activity. Post-translationally, ubiquitinated, leading to its degradation in the lysosome. Deubiquitination by USP10 in early endosomes enhances its endocytic recycling to the cell membrane. Ubiquitinated by RNF185 during ER stress. Ubiquitinated by MARCHF2.

Its subcellular location is the apical cell membrane. The protein resides in the early endosome membrane. The protein localises to the cell membrane. It localises to the recycling endosome membrane. It is found in the endoplasmic reticulum membrane. Its subcellular location is the nucleus. It carries out the reaction ATP + H2O + closed Cl(-) channel = ADP + phosphate + open Cl(-) channel.. The catalysed reaction is chloride(in) = chloride(out). It catalyses the reaction hydrogencarbonate(in) = hydrogencarbonate(out). The enzyme catalyses ATP + H2O = ADP + phosphate + H(+). Its function is as follows. Epithelial ion channel that plays an important role in the regulation of epithelial ion and water transport and fluid homeostasis. Mediates the transport of chloride ions across the cell membrane. Possesses an intrinsic ATPase activity and utilizes ATP to gate its channel; the passive flow of anions through the channel is gated by cycles of ATP binding and hydrolysis by the ATP-binding domains. The ion channel is also permeable to HCO(3)(-); selectivity depends on the extracellular chloride concentration. Exerts its function also by modulating the activity of other ion channels and transporters. Contributes to the regulation of the pH and the ion content of the epithelial fluid layer. Modulates the activity of the epithelial sodium channel (ENaC) complex, in part by regulating the cell surface expression of the ENaC complex. May regulate bicarbonate secretion and salvage in epithelial cells by regulating the transporter SLC4A7. Can inhibit the chloride channel activity of ANO1. Plays a role in the chloride and bicarbonate homeostasis during sperm epididymal maturation and capacitation. This Macaca fascicularis (Crab-eating macaque) protein is Cystic fibrosis transmembrane conductance regulator.